Reading from the N-terminus, the 463-residue chain is ATP synthase subunit beta (463 aa).

152–159 (GGAGVGKT) provides a ligand contact to ATP.

Belongs to the ATPase alpha/beta chains family. In terms of assembly, F-type ATPases have 2 components, CF(1) - the catalytic core - and CF(0) - the membrane proton channel. CF(1) has five subunits: alpha(3), beta(3), gamma(1), delta(1), epsilon(1). CF(0) has three main subunits: a(1), b(2) and c(9-12). The alpha and beta chains form an alternating ring which encloses part of the gamma chain. CF(1) is attached to CF(0) by a central stalk formed by the gamma and epsilon chains, while a peripheral stalk is formed by the delta and b chains.

It is found in the cell inner membrane. It catalyses the reaction ATP + H2O + 4 H(+)(in) = ADP + phosphate + 5 H(+)(out). In terms of biological role, produces ATP from ADP in the presence of a proton gradient across the membrane. The catalytic sites are hosted primarily by the beta subunits. In Shewanella sp. (strain MR-7), this protein is ATP synthase subunit beta.